Reading from the N-terminus, the 872-residue chain is Telomerase component p95 (872 aa).

Disordered stretches follow at residues 55 to 75 and 471 to 492; these read NQDQ…NSNK and KNNK…ESTS. The segment covering 474–486 has biased composition (basic and acidic residues); that stretch reads KNQEETPETKDET.

In terms of assembly, telomerase consist of two subunit, p80 and p95 that form a 1:1:1 complex with the 159 nt telomerase RNA.

The protein localises to the nucleus. The protein resides in the chromosome. It localises to the telomere. It carries out the reaction DNA(n) + a 2'-deoxyribonucleoside 5'-triphosphate = DNA(n+1) + diphosphate. Ribonucleoprotein DNA polymerase that catalyzes the de novo synthesis of telomeric simple sequence repeats. Subunit p95 contains some or all of the template-independent primer DNA-binding site termed the anchor site. The sequence is that of Telomerase component p95 from Tetrahymena thermophila.